Here is a 485-residue protein sequence, read N- to C-terminus: MAKAKAKQEPQQQRQTLQATYRFVLFFIAGSLAAFAFHALTSSTGSLMGWRLRLHHLPTAHYLQTRDEFAVYSVDELNAFKEFYDKSISDSVGASFTEAEQTNIKEAMGALRLAQEMYMAGKDDKAARLFEHALALAPKHPEVLLRYGEFLEHNQRNIVLADQYYFQALCISPSNSEALANRQRTADVVQTLDERRLISLDEKRDALSAIHEANSALRRAKKEAYFQHIYHSVGIEGNTMTLAQTRSVLETRMAVDGKSIDEHNEILGMDLAMKYINASLVQKLEITLKDILELHRRVLGHVDPIEGGEFRRNQVYVGGHVPPGPGDLAILMQRFEHWLNSEHSSSLHPVNYAALAHYKLVHIHPFVDGNGRTSRLLMNTLLMRAGYPPVIIPKQQRSKYYHFLKLANEGDIRPFVRFIADCTEKTLDLYLWATSDLPQQIPMLIQTENEGHVLAQLQPHIAQSIPELHESGSGSGSGADPIRVP.

Residues 21-43 form a helical membrane-spanning segment; that stretch reads YRFVLFFIAGSLAAFAFHALTSS. TPR repeat units follow at residues 107–140 and 141–175; these read AMGA…APKH and PEVL…SPSN. An Inhibitory (S/T)XXXE(G/N) motif motif is present at residues 232 to 237; sequence SVGIEG. Residues Glu-236 and 317–320 contribute to the ATP site; that span reads VGGH. The 136-residue stretch at 286 to 421 folds into the Fido domain; the sequence is ITLKDILELH…IRPFVRFIAD (136 aa). His-364 is an active-site residue. ATP is bound by residues 368–375, 400–401, and Asn-408; these read DGNGRTSR and YY.

It belongs to the fic family. As to quaternary structure, homodimer.

It is found in the membrane. It catalyses the reaction L-tyrosyl-[protein] + ATP = O-(5'-adenylyl)-L-tyrosyl-[protein] + diphosphate. It carries out the reaction L-threonyl-[protein] + ATP = 3-O-(5'-adenylyl)-L-threonyl-[protein] + diphosphate. The enzyme catalyses 3-O-(5'-adenylyl)-L-threonyl-[protein] + H2O = L-threonyl-[protein] + AMP + H(+). Its activity is regulated as follows. The side chain of Glu-236 determines which of the two opposing activities (AMPylase or de-AMPylase) will take place. In response to endoplasmic reticulum stress, mediates de-AMPylase activity. Adenylyltransferase activity is inhibited by the inhibitory helix present at the N-terminus: Glu-236 binds ATP and competes with ATP-binding at Arg-375, thereby preventing adenylyltransferase activity. In unstressed cells, disengagement of Glu-236 promotes adenylyltransferase activity. Activation dissociates ATP-binding from Glu-236, allowing ordered binding of the entire ATP moiety with the alpha-phosphate in an orientation that is productive for accepting an incoming target hydroxyl side chain. Functionally, protein that can both mediate the addition of adenosine 5'-monophosphate (AMP) to specific residues of target proteins (AMPylation), and the removal of the same modification from target proteins (de-AMPylation), depending on the context. The side chain of Glu-236 determines which of the two opposing activities (AMPylase or de-AMPylase) will take place. Acts as a key regulator of the unfolded protein response (UPR) by mediating AMPylation or de-AMPylation of Hsc70-3/BiP. In unstressed cells, acts as an adenylyltransferase by mediating AMPylation of Hsc70-3/BiP at 'Thr-518', thereby inactivating it. In response to endoplasmic reticulum stress, acts as a phosphodiesterase by mediating removal of ATP (de-AMPylation) from Hsc70-3/BiP at 'Thr-518', leading to restore HSPA5/BiP activity. The chain is Protein adenylyltransferase Fic from Drosophila virilis (Fruit fly).